Consider the following 259-residue polypeptide: Isoprenyl transferase (259 aa).

Residue Asp33 is part of the active site. Residue Asp33 participates in Mg(2+) binding. Substrate contacts are provided by residues 34-37, Trp38, His51, and 79-81; these read GNRR and STE. Residue Asn82 is the Proton acceptor of the active site. Substrate-binding positions include Arg86, Arg208, and 214-216; that span reads RMS. Glu227 is a Mg(2+) binding site.

The protein belongs to the UPP synthase family. As to quaternary structure, homodimer. The cofactor is Mg(2+).

In terms of biological role, catalyzes the condensation of isopentenyl diphosphate (IPP) with allylic pyrophosphates generating different type of terpenoids. The chain is Isoprenyl transferase from Streptomyces fradiae (Streptomyces roseoflavus).